The sequence spans 238 residues: Small ribosomal subunit protein uS2 (238 aa).

This sequence belongs to the universal ribosomal protein uS2 family.

This is Small ribosomal subunit protein uS2 from Synechococcus sp. (strain CC9605).